Consider the following 604-residue polypeptide: Linalool synthase Tps-5073L4, chloroplastic (604 aa).

The N-terminal 36 residues, 1–36, are a transit peptide targeting the chloroplast; it reads MSSMRIYVAIMKKPSVKHVDYVDKKASKPSWRVSSS. (2E)-geranyl diphosphate-binding residues include Arg-323, Asp-360, Asp-364, Arg-501, and Asp-504. Asp-360 and Asp-364 together coordinate Mg(2+). A DDXXD motif motif is present at residues 360-364; the sequence is DDVYD. Residues Asp-504, Thr-508, and Glu-512 each contribute to the Mg(2+) site.

The protein belongs to the terpene synthase family. Tpsb subfamily. In terms of assembly, monomer. Mg(2+) is required as a cofactor. It depends on Mn(2+) as a cofactor.

Its subcellular location is the plastid. The protein localises to the chloroplast. The catalysed reaction is (2E)-geranyl diphosphate + H2O = linalool + diphosphate. Its pathway is secondary metabolite biosynthesis; terpenoid biosynthesis. Its function is as follows. Monoterpene synthase (mono-TPS) involved in the biosynthesis of monoterpenes natural products. Catalyzes the conversion of (2E)-geranyl diphosphate (GPP) into linalool. The sequence is that of Linalool synthase Tps-5073L4, chloroplastic from Perilla frutescens (Beefsteak mint).